A 214-amino-acid chain; its full sequence is MTRPLFITFEGPEGAGKTSVLEALVSELKPILGDQLVTTREPGGNPISEAIRQILQPEDDNGMDDRTEALLYAAARRQHIVETILPALSAGKVLISDRYVDSSLAYQGGGRDLGVDNIWQINQFAIDGLLPDLTIYFDVPSELGLSRVMANRQGKIDRLDKESLSFHQRVRTTYLELQHDFSDRIKIIDATQPLTDVISDTRALLQEALNSRKG.

Position 11–18 (11–18 (GPEGAGKT)) interacts with ATP.

It belongs to the thymidylate kinase family.

It catalyses the reaction dTMP + ATP = dTDP + ADP. Phosphorylation of dTMP to form dTDP in both de novo and salvage pathways of dTTP synthesis. In Leuconostoc citreum (strain KM20), this protein is Thymidylate kinase.